Consider the following 374-residue polypeptide: uncharacterized protein (374 aa).

A divalent metal cation is bound by residues D158, H160, D190, N221, H312, and H314.

The protein belongs to the metallophosphoesterase superfamily. Requires a divalent metal cation as cofactor.

This is an uncharacterized protein from Campylobacter jejuni subsp. jejuni serotype O:2 (strain ATCC 700819 / NCTC 11168).